The primary structure comprises 416 residues: UDP-N-acetylglucosamine 1-carboxyvinyltransferase (416 aa).

Residue 22–23 (KN) coordinates phosphoenolpyruvate. Arginine 92 provides a ligand contact to UDP-N-acetyl-alpha-D-glucosamine. The Proton donor role is filled by cysteine 116. Cysteine 116 is modified (2-(S-cysteinyl)pyruvic acid O-phosphothioketal). UDP-N-acetyl-alpha-D-glucosamine is bound by residues 121-125 (RPVDQ), aspartate 304, and isoleucine 326.

This sequence belongs to the EPSP synthase family. MurA subfamily.

It is found in the cytoplasm. It carries out the reaction phosphoenolpyruvate + UDP-N-acetyl-alpha-D-glucosamine = UDP-N-acetyl-3-O-(1-carboxyvinyl)-alpha-D-glucosamine + phosphate. It participates in cell wall biogenesis; peptidoglycan biosynthesis. Its function is as follows. Cell wall formation. Adds enolpyruvyl to UDP-N-acetylglucosamine. In Cupriavidus pinatubonensis (strain JMP 134 / LMG 1197) (Cupriavidus necator (strain JMP 134)), this protein is UDP-N-acetylglucosamine 1-carboxyvinyltransferase.